The following is a 382-amino-acid chain: Mannitol-1-phosphate 5-dehydrogenase (382 aa).

An NAD(+)-binding site is contributed by 3-14 (ALHFGAGNIGRG).

The protein belongs to the mannitol dehydrogenase family.

It carries out the reaction D-mannitol 1-phosphate + NAD(+) = beta-D-fructose 6-phosphate + NADH + H(+). This Salmonella schwarzengrund (strain CVM19633) protein is Mannitol-1-phosphate 5-dehydrogenase.